The primary structure comprises 103 residues: Large ribosomal subunit protein bL21 (103 aa).

This sequence belongs to the bacterial ribosomal protein bL21 family. As to quaternary structure, part of the 50S ribosomal subunit. Contacts protein L20.

This protein binds to 23S rRNA in the presence of protein L20. This chain is Large ribosomal subunit protein bL21, found in Teredinibacter turnerae (strain ATCC 39867 / T7901).